Consider the following 322-residue polypeptide: Protein mono-ADP-ribosyltransferase PARP16 (322 aa).

The Cytoplasmic portion of the chain corresponds to 1–287 (MQPSGWAAAR…RASSQLSWFS (287 aa)). The region spanning 5-91 (GWAAAREAAG…AWDLVSWILS (87 aa)) is the PARP alpha-helical domain. Asp-37 carries the post-translational modification ADP-ribosyl aspartic acid. ADP-ribosyl glutamic acid is present on Glu-70. A PARP catalytic domain is found at 94–279 (VLTIHSAGKA…VYSQKPPKRA (186 aa)). Residues Lys-110 and Lys-137 each carry the N6-(ADP-ribosyl)lysine modification. His-152, Tyr-182, and Tyr-254 together coordinate NAD(+). A helical transmembrane segment spans residues 288-308 (SHWFTVMISLYLLLLLIVSVI). Residues 309–322 (NSSAFQHFWNRAKR) lie on the Lumenal side of the membrane.

It belongs to the ARTD/PARP family. Interacts with KPNB1. In terms of processing, auto-mono-ADP-ribosylated.

It is found in the endoplasmic reticulum membrane. It catalyses the reaction L-aspartyl-[protein] + NAD(+) = 4-O-(ADP-D-ribosyl)-L-aspartyl-[protein] + nicotinamide. It carries out the reaction L-glutamyl-[protein] + NAD(+) = 5-O-(ADP-D-ribosyl)-L-glutamyl-[protein] + nicotinamide. The enzyme catalyses L-lysyl-[protein] + NAD(+) = N(6)-(ADP-D-ribosyl)-L-lysyl-[protein] + nicotinamide + H(+). In absence of activation signal, PARP16 is autoinhibited by the PARP alpha-helical domain (also named HD region), which prevents effective NAD(+)-binding. Activity is highly stimulated by signals, which unfold the PARP alpha-helical domain, relieving autoinhibition. Its function is as follows. Intracellular mono-ADP-ribosyltransferase that plays a role in different processes, such as protein translation and unfolded protein response (UPR), through the mono-ADP-ribosylation of proteins involved in those processes. Acts as an inhibitor of protein translation by catalyzing mono-ADP-ribosylation of ribosomal subunits, such as RPL14 and RPS6, thereby inhibiting polysome assembly and mRNA loading. Mono-ADP-ribosylation of ribosomal subunits is promoted by NMNAT2. Involved in the unfolded protein response (UPR) by ADP-ribosylating and activating EIF2AK3 and ERN1, two important UPR effectors. May also mediate mono-ADP-ribosylation of karyopherin KPNB1 a nuclear import factor. May not modify proteins on arginine or cysteine residues compared to other mono-ADP-ribosyltransferases. In Homo sapiens (Human), this protein is Protein mono-ADP-ribosyltransferase PARP16.